Here is a 201-residue protein sequence, read N- to C-terminus: Peroxiredoxin-2F, mitochondrial (201 aa).

The N-terminal 30 residues, 1–30 (MAMSILKLRNLSALRSAANSARIGVSSRGF), are a transit peptide targeting the mitochondrion. T37 is modified (phosphothreonine). In terms of domain architecture, Thioredoxin spans 37–201 (TDITSAAPGV…TGAEVILGQI (165 aa)). C89 (cysteine sulfenic acid (-SOH) intermediate) is an active-site residue. S149 is subject to Phosphoserine.

This sequence belongs to the peroxiredoxin family. Prx5 subfamily. As to quaternary structure, monomer. Expressed in the whole plant.

It is found in the mitochondrion matrix. It carries out the reaction [glutaredoxin]-dithiol + a hydroperoxide = [glutaredoxin]-disulfide + an alcohol + H2O. Its function is as follows. Thiol-specific peroxidase that catalyzes the reduction of hydrogen peroxide and organic hydroperoxides to water and alcohols, respectively. Plays a role in cell protection against oxidative stress by detoxifying peroxides. Reduces preferentially hydrogen peroxide rather than alkyl peroxides. May be involved in mitochondrial redox homeostasis. The sequence is that of Peroxiredoxin-2F, mitochondrial (PRXIIF) from Arabidopsis thaliana (Mouse-ear cress).